The chain runs to 533 residues: CWF19-like protein 1 homolog (533 aa).

The interval 290 to 314 (EMGGAEDGAGNGRKRHNDGGNDGPR) is disordered.

Belongs to the CWF19 family.

This Caenorhabditis elegans protein is CWF19-like protein 1 homolog.